Consider the following 254-residue polypeptide: Molybdate-binding protein ModA (254 aa).

A signal peptide spans 1 to 24 (MKKLTKISTALLIAGLGFSFAASA). 5 residues coordinate molybdate: Ser33, Ser61, Ala146, Val173, and Tyr191.

Belongs to the bacterial solute-binding protein ModA family. As to quaternary structure, the complex is composed of two ATP-binding proteins (ModC), two transmembrane proteins (ModB) and a solute-binding protein (ModA).

The protein localises to the periplasm. Functionally, involved in the transport of molybdenum into the cell. The chain is Molybdate-binding protein ModA (modA) from Haemophilus influenzae (strain ATCC 51907 / DSM 11121 / KW20 / Rd).